Consider the following 285-residue polypeptide: NADH-cytochrome b5 reductase 1 (285 aa).

Residues 7-23 (LATFSVLVLFYKLFTYS) traverse the membrane as a helical segment. An FAD-binding FR-type domain is found at 40 to 144 (TEFREFELVE…SGPRGFYEYV (105 aa)). FAD is bound by residues 124–139 (GDMK…GPRG) and 150–182 (HLAM…RVTL).

It belongs to the flavoprotein pyridine nucleotide cytochrome reductase family. Monomer. Component of the 2-(3-amino-3-carboxypropyl)histidine synthase complex composed of DPH1, DPH2, DPH3 and a NADH-dependent reductase, predominantly CBR1. FAD serves as cofactor.

It is found in the mitochondrion outer membrane. It carries out the reaction 2 Fe(III)-[cytochrome b5] + NADH = 2 Fe(II)-[cytochrome b5] + NAD(+) + H(+). The enzyme catalyses 2 Fe(3+)-[Dph3] + NADH = 2 Fe(2+)-[Dph3] + NAD(+) + H(+). It participates in protein modification; peptidyl-diphthamide biosynthesis. NADH-dependent reductase for DPH3 and cytochrome b5. Required for the first step of diphthamide biosynthesis, a post-translational modification of histidine which occurs in elongation factor 2. DPH1 and DPH2 transfer a 3-amino-3-carboxypropyl (ACP) group from S-adenosyl-L-methionine (SAM) to a histidine residue, the reaction is assisted by a reduction system comprising DPH3 and a NADH-dependent reductase, predominantly CBR1. By reducing DPH3, also involved in the formation of the tRNA wobble base modification mcm5s 2U (5-methoxycarbonylmethyl-2-thiouridine), mediated by the elongator complex. The cytochrome b5/NADH cytochrome b5 reductase electron transfer system supports the catalytic activity of several sterol biosynthetic enzymes. The chain is NADH-cytochrome b5 reductase 1 (CBR1) from Candida glabrata (strain ATCC 2001 / BCRC 20586 / JCM 3761 / NBRC 0622 / NRRL Y-65 / CBS 138) (Yeast).